The sequence spans 358 residues: Photosystem II protein D1 3 (358 aa).

Transmembrane regions (helical) follow at residues 28-45 (YIGWFGVLMIPCLLAATT), 117-132 (HFLIGISAYMGRQWEL), and 141-155 (WICVAYSAPLSAAMA). H117 provides a ligand contact to chlorophyll a. Position 125 (Y125) interacts with pheophytin a. Residues D169 and E188 each coordinate [CaMn4O5] cluster. The chain crosses the membrane as a helical span at residues 196-217 (FHMLGVAGVFGGSLFSAMHGSL). H197 lines the chlorophyll a pocket. Residues H214 and 263-264 (SF) contribute to the a quinone site. Residue H214 coordinates Fe cation. A Fe cation-binding site is contributed by H271. The helical transmembrane segment at 273–287 (LLGAWPVVGIWFTSM) threads the bilayer. 4 residues coordinate [CaMn4O5] cluster: H331, E332, D341, and A343. Positions 344-358 (TVESTPVALQAPAIG) are excised as a propeptide.

This sequence belongs to the reaction center PufL/M/PsbA/D family. In terms of assembly, PSII is composed of 1 copy each of membrane proteins PsbA, PsbB, PsbC, PsbD, PsbE, PsbF, PsbH, PsbI, PsbJ, PsbK, PsbL, PsbM, PsbT, PsbX, PsbY, PsbZ, Psb30/Ycf12, peripheral proteins PsbO, CyanoQ (PsbQ), PsbU, PsbV and a large number of cofactors. It forms dimeric complexes. The D1/D2 heterodimer binds P680, chlorophylls that are the primary electron donor of PSII, and subsequent electron acceptors. It shares a non-heme iron and each subunit binds pheophytin, quinone, additional chlorophylls, carotenoids and lipids. D1 provides most of the ligands for the Mn4-Ca-O5 cluster of the oxygen-evolving complex (OEC). There is also a Cl(-1) ion associated with D1 and D2, which is required for oxygen evolution. The PSII complex binds additional chlorophylls, carotenoids and specific lipids. serves as cofactor. Post-translationally, tyr-160 forms a radical intermediate that is referred to as redox-active TyrZ, YZ or Y-Z. C-terminally processed by CtpA; processing is essential to allow assembly of the oxygen-evolving complex and thus photosynthetic growth.

The protein resides in the cellular thylakoid membrane. The enzyme catalyses 2 a plastoquinone + 4 hnu + 2 H2O = 2 a plastoquinol + O2. In terms of biological role, photosystem II (PSII) is a light-driven water:plastoquinone oxidoreductase that uses light energy to abstract electrons from H(2)O, generating O(2) and a proton gradient subsequently used for ATP formation. It consists of a core antenna complex that captures photons, and an electron transfer chain that converts photonic excitation into a charge separation. The D1/D2 (PsbA/PsbD) reaction center heterodimer binds P680, the primary electron donor of PSII as well as several subsequent electron acceptors. This is Photosystem II protein D1 3 from Synechococcus sp. (strain CC9311).